Reading from the N-terminus, the 501-residue chain is Ribose import ATP-binding protein RbsA (501 aa).

2 ABC transporter domains span residues 8–245 (LKMV…VGRT) and 255–500 (VKKG…VGIN). 40–47 (GENGAGKS) lines the ATP pocket.

The protein belongs to the ABC transporter superfamily. Ribose importer (TC 3.A.1.2.1) family. In terms of assembly, the complex is composed of an ATP-binding protein (RbsA), two transmembrane proteins (RbsC) and a solute-binding protein (RbsB).

Its subcellular location is the cell membrane. It catalyses the reaction D-ribose(out) + ATP + H2O = D-ribose(in) + ADP + phosphate + H(+). Its function is as follows. Part of the ABC transporter complex RbsABC involved in ribose import. Responsible for energy coupling to the transport system. The chain is Ribose import ATP-binding protein RbsA from Clostridium perfringens (strain 13 / Type A).